Reading from the N-terminus, the 124-residue chain is Large ribosomal subunit protein bL12 (124 aa).

Belongs to the bacterial ribosomal protein bL12 family. Homodimer. Part of the ribosomal stalk of the 50S ribosomal subunit. Forms a multimeric L10(L12)X complex, where L10 forms an elongated spine to which 2 to 4 L12 dimers bind in a sequential fashion. Binds GTP-bound translation factors.

In terms of biological role, forms part of the ribosomal stalk which helps the ribosome interact with GTP-bound translation factors. Is thus essential for accurate translation. This Phytoplasma australiense protein is Large ribosomal subunit protein bL12.